A 116-amino-acid chain; its full sequence is Large ribosomal subunit protein bL19 (116 aa).

It belongs to the bacterial ribosomal protein bL19 family.

This protein is located at the 30S-50S ribosomal subunit interface and may play a role in the structure and function of the aminoacyl-tRNA binding site. In Lactobacillus gasseri (strain ATCC 33323 / DSM 20243 / BCRC 14619 / CIP 102991 / JCM 1131 / KCTC 3163 / NCIMB 11718 / NCTC 13722 / AM63), this protein is Large ribosomal subunit protein bL19.